We begin with the raw amino-acid sequence, 848 residues long: Translation initiation factor IF-2 (848 aa).

Residues 106–150 (TEQQTEAENSTNINLSEQTIKNNSHQSSSNTIETTQEKKQNDDLS) form a disordered region. A compositionally biased stretch (polar residues) spans 112-139 (AENSTNINLSEQTIKNNSHQSSSNTIET). The tr-type G domain maps to 347-517 (PRAPIITVMG…LLLADMLELK (171 aa)). The segment at 356 to 363 (GHVDHGKT) is G1. 356–363 (GHVDHGKT) provides a ligand contact to GTP. Residues 381 to 385 (GITQH) form a G2 region. The interval 403–406 (DTPG) is G3. GTP-binding positions include 403 to 407 (DTPGH) and 457 to 460 (NKID). The tract at residues 457–460 (NKID) is G4. Residues 493–495 (SAL) form a G5 region.

The protein belongs to the TRAFAC class translation factor GTPase superfamily. Classic translation factor GTPase family. IF-2 subfamily.

Its subcellular location is the cytoplasm. In terms of biological role, one of the essential components for the initiation of protein synthesis. Protects formylmethionyl-tRNA from spontaneous hydrolysis and promotes its binding to the 30S ribosomal subunits. Also involved in the hydrolysis of GTP during the formation of the 70S ribosomal complex. The protein is Translation initiation factor IF-2 of Orientia tsutsugamushi (strain Boryong) (Rickettsia tsutsugamushi).